We begin with the raw amino-acid sequence, 274 residues long: Glutamate--cysteine ligase regulatory subunit (274 aa).

A Phosphoserine modification is found at Ser-59. An N6-acetyllysine modification is found at Lys-263.

It belongs to the aldo/keto reductase family. Glutamate--cysteine ligase light chain subfamily. As to quaternary structure, heterodimer of a catalytic heavy chain and a regulatory light chain. In terms of tissue distribution, most abundant in kidney. Also found in liver and testis.

The protein operates within sulfur metabolism; glutathione biosynthesis; glutathione from L-cysteine and L-glutamate: step 1/2. The polypeptide is Glutamate--cysteine ligase regulatory subunit (Gclm) (Rattus norvegicus (Rat)).